Reading from the N-terminus, the 303-residue chain is Zinc transporter ZIP9-A (303 aa).

Residues 7 to 27 (ISLLSLAMLVGCYVSGIIPLA) traverse the membrane as a helical segment. N-linked (GlcNAc...) asparagine glycosylation is present at N29. The next 5 helical transmembrane spans lie at 35 to 55 (LKLVTVLGAGLLCGTALAVII), 102 to 122 (AYIGVSLVLGFVFMLLVDQIG), 142 to 162 (ITTTLGLVVHAAADGVALGAA), 172 to 192 (LIVFVAIMLHKAPAAFGLVSF), and 206 to 226 (HLLVFALAAPVLSMLTYLGLS). N237 carries N-linked (GlcNAc...) asparagine glycosylation. The next 2 membrane-spanning stretches (helical) occupy residues 240–260 (GVAMLFSAGTFLYVATVHVLP) and 282–302 (LEVCALVLGCLIPLVLSIGHQ).

Belongs to the ZIP transporter (TC 2.A.5) family.

Its subcellular location is the golgi apparatus. The protein resides in the trans-Golgi network membrane. It is found in the cell membrane. The protein localises to the cytoplasm. It localises to the perinuclear region. Its subcellular location is the mitochondrion. The protein resides in the nucleus. The enzyme catalyses Zn(2+)(in) = Zn(2+)(out). In terms of biological role, transports zinc ions across cell and organelle membranes into the cytoplasm and regulates intracellular zinc homeostasis. Participates in the zinc ions efflux out of the secretory compartments. Regulates intracellular zinc level, resulting in the enhancement of AKT1 and MAPK3/MAPK1 (Erk1/2) phosphorylation in response to the BCR activation. Also functions as a membrane androgen receptor that mediates, through a G protein, the non-classical androgen signaling pathway, characterized by the activation of MAPK3/MAPK1 (Erk1/2) and transcription factors CREB1 or ATF1. Moreover, has dual functions as a membrane-bound androgen receptor and as an androgen-dependent zinc transporter both of which are mediated through an inhibitory G protein (Gi) that mediates both MAP kinase and zinc signaling leading to the androgen-dependent apoptotic process. This chain is Zinc transporter ZIP9-A (slc39a9-a), found in Xenopus laevis (African clawed frog).